The sequence spans 360 residues: NAD(P)H-quinone oxidoreductase subunit 1, chloroplastic (360 aa).

9 helical membrane-spanning segments follow: residues 27-47 (IWIF…VLVI), 98-118 (FSIG…VIPF), 129-149 (IGIF…LMSG), 165-185 (AAQS…ISLL), 203-223 (FWGW…ISSL), 248-268 (YSGI…LISS), 269-289 (LFVT…ISIL), 297-317 (IFGT…FLFI), and 340-360 (FLLP…LFSL).

Belongs to the complex I subunit 1 family. NDH is composed of at least 16 different subunits, 5 of which are encoded in the nucleus.

The protein localises to the plastid. Its subcellular location is the chloroplast thylakoid membrane. It carries out the reaction a plastoquinone + NADH + (n+1) H(+)(in) = a plastoquinol + NAD(+) + n H(+)(out). The catalysed reaction is a plastoquinone + NADPH + (n+1) H(+)(in) = a plastoquinol + NADP(+) + n H(+)(out). Functionally, NDH shuttles electrons from NAD(P)H:plastoquinone, via FMN and iron-sulfur (Fe-S) centers, to quinones in the photosynthetic chain and possibly in a chloroplast respiratory chain. The immediate electron acceptor for the enzyme in this species is believed to be plastoquinone. Couples the redox reaction to proton translocation, and thus conserves the redox energy in a proton gradient. This Olimarabidopsis pumila (Dwarf rocket) protein is NAD(P)H-quinone oxidoreductase subunit 1, chloroplastic.